Here is a 106-residue protein sequence, read N- to C-terminus: Cell division protein FtsB (106 aa).

Over 1–3 the chain is Cytoplasmic; sequence MRL. A helical membrane pass occupies residues 4 to 21; it reads LTLIFVALIALLQYPLWL. The Periplasmic segment spans residues 22–106; sequence GKGSWLRVWD…SPPAALTGAQ (85 aa). Residues 31-73 are a coiled coil; that stretch reads DLNQKIVAQKAVNAELKLRNDTLDAEVRDLKQGNAAIEERARS.

The protein belongs to the FtsB family. In terms of assembly, part of a complex composed of FtsB, FtsL and FtsQ.

The protein resides in the cell inner membrane. Essential cell division protein. May link together the upstream cell division proteins, which are predominantly cytoplasmic, with the downstream cell division proteins, which are predominantly periplasmic. In Methylobacillus flagellatus (strain ATCC 51484 / DSM 6875 / VKM B-1610 / KT), this protein is Cell division protein FtsB.